Here is a 285-residue protein sequence, read N- to C-terminus: Bifunctional protein FolD (285 aa).

NADP(+)-binding positions include 166-168 (GRS), Ser191, and Ile232.

Belongs to the tetrahydrofolate dehydrogenase/cyclohydrolase family. As to quaternary structure, homodimer.

The catalysed reaction is (6R)-5,10-methylene-5,6,7,8-tetrahydrofolate + NADP(+) = (6R)-5,10-methenyltetrahydrofolate + NADPH. It carries out the reaction (6R)-5,10-methenyltetrahydrofolate + H2O = (6R)-10-formyltetrahydrofolate + H(+). It participates in one-carbon metabolism; tetrahydrofolate interconversion. In terms of biological role, catalyzes the oxidation of 5,10-methylenetetrahydrofolate to 5,10-methenyltetrahydrofolate and then the hydrolysis of 5,10-methenyltetrahydrofolate to 10-formyltetrahydrofolate. The chain is Bifunctional protein FolD from Rickettsia typhi (strain ATCC VR-144 / Wilmington).